A 142-amino-acid polypeptide reads, in one-letter code: Deoxyuridine 5'-triphosphate nucleotidohydrolase (142 aa).

Substrate contacts are provided by residues 62–64, Asn-75, and 79–81; these read RSG and TID.

This sequence belongs to the dUTPase family. Mg(2+) serves as cofactor.

It catalyses the reaction dUTP + H2O = dUMP + diphosphate + H(+). It functions in the pathway pyrimidine metabolism; dUMP biosynthesis; dUMP from dCTP (dUTP route): step 2/2. Functionally, this enzyme is involved in nucleotide metabolism: it produces dUMP, the immediate precursor of thymidine nucleotides and it decreases the intracellular concentration of dUTP so that uracil cannot be incorporated into DNA. The protein is Deoxyuridine 5'-triphosphate nucleotidohydrolase of Crocosphaera subtropica (strain ATCC 51142 / BH68) (Cyanothece sp. (strain ATCC 51142)).